The sequence spans 458 residues: Glycine--tRNA ligase (458 aa).

Residues Arg97 and Glu171 each coordinate substrate. Residues 203 to 205, 213 to 218, 287 to 288, and 331 to 334 contribute to the ATP site; these read RNE, FRTREF, EL, and GADR. Residue 218–222 coordinates substrate; that stretch reads FEQME. 327–331 is a substrate binding site; that stretch reads EPSLG.

This sequence belongs to the class-II aminoacyl-tRNA synthetase family. In terms of assembly, homodimer.

It localises to the cytoplasm. The catalysed reaction is tRNA(Gly) + glycine + ATP = glycyl-tRNA(Gly) + AMP + diphosphate. Its function is as follows. Catalyzes the attachment of glycine to tRNA(Gly). The sequence is that of Glycine--tRNA ligase from Bacillus anthracis.